A 290-amino-acid chain; its full sequence is Oxaloacetate decarboxylase 2 (290 aa).

Residue serine 50 coordinates substrate. Residue aspartate 88 coordinates Mg(2+). Residues arginine 159 and histidine 235 each coordinate substrate.

It belongs to the isocitrate lyase/PEP mutase superfamily. Oxaloacetate decarboxylase family. Homotetramer; dimer of dimers. It depends on Mg(2+) as a cofactor.

It carries out the reaction oxaloacetate + H(+) = pyruvate + CO2. Its function is as follows. Catalyzes the decarboxylation of oxaloacetate into pyruvate. Seems to play a role in maintaining cellular concentrations of bicarbonate and pyruvate. In Pseudomonas fluorescens (strain Pf0-1), this protein is Oxaloacetate decarboxylase 2.